We begin with the raw amino-acid sequence, 187 residues long: NADH-quinone oxidoreductase subunit B (187 aa).

Residues 1-10 (MTADHNRALH) are compositionally biased toward basic and acidic residues. The interval 1–22 (MTADHNRALHDAPTARGGEVRQ) is disordered. [4Fe-4S] cluster is bound by residues C66, C67, C131, and C161.

Belongs to the complex I 20 kDa subunit family. As to quaternary structure, NDH-1 is composed of 14 different subunits. Subunits NuoB, C, D, E, F, and G constitute the peripheral sector of the complex. Requires [4Fe-4S] cluster as cofactor.

The protein resides in the cell inner membrane. It carries out the reaction a quinone + NADH + 5 H(+)(in) = a quinol + NAD(+) + 4 H(+)(out). Functionally, NDH-1 shuttles electrons from NADH, via FMN and iron-sulfur (Fe-S) centers, to quinones in the respiratory chain. Couples the redox reaction to proton translocation (for every two electrons transferred, four hydrogen ions are translocated across the cytoplasmic membrane), and thus conserves the redox energy in a proton gradient. The polypeptide is NADH-quinone oxidoreductase subunit B (Erythrobacter litoralis (strain HTCC2594)).